The primary structure comprises 1762 residues: Non-reducing polyketide synthase PKS8-1 (1762 aa).

Residues Asp-17–Gly-247 form an N-terminal acylcarrier protein transacylase domain (SAT) region. The 435-residue stretch at Gln-385–Glu-819 folds into the Ketosynthase family 3 (KS3) domain. Residues Cys-558, His-694, and His-737 each act as for beta-ketoacyl synthase activity in the active site. The tract at residues Phe-920–Ala-1240 is malonyl-CoA:ACP transacylase (MAT) domain. The tract at residues Thr-1308 to Ser-1622 is product template (PT) domain. The N-terminal hotdog fold stretch occupies residues Gln-1312–Trp-1448. The region spanning Gln-1312 to Asn-1618 is the PKS/mFAS DH domain. The active-site Proton acceptor; for dehydratase activity is His-1344. Positions Ala-1471 to Asn-1618 are C-terminal hotdog fold. Residue Asp-1529 is the Proton donor; for dehydratase activity of the active site. Positions Arg-1632–Ser-1689 are disordered. Residues Pro-1671–Ala-1680 are compositionally biased toward pro residues. A Carrier domain is found at Asp-1685–Tyr-1762. The residue at position 1722 (Ser-1722) is an O-(pantetheine 4'-phosphoryl)serine.

The catalysed reaction is holo-[ACP] + 8 malonyl-CoA + 8 H(+) = atrochrysone carboxyl-[ACP] + 8 CO2 + 8 CoA + 2 H2O. The protein operates within secondary metabolite biosynthesis. In terms of biological role, non-reducing polyketide synthase; part of the gene cluster that mediates the biosynthesis of an emodin derivative that may be involved in black Sigatoka disease of banana. The pathway begins with the synthesis of atrochrysone thioester by the polyketide synthase PKS8-1. The atrochrysone carboxyl ACP thioesterase MYCFIDRAFT_190111 then breaks the thioester bond and releases the atrochrysone carboxylic acid from PKS8-1. The decarboxylase MYCFIDRAFT_34057 then catalyzes the concerted decarboxylation-elimination required to convert atochrysone carboxylic acid into emodin anthrone, which is further oxidized to emodin by the anthrone oxygenase MYCFIDRAFT_34418. The functions of the other tailoring enzymes as well as the final product of the cluster have still to be identified. This Pseudocercospora fijiensis (strain CIRAD86) (Black leaf streak disease fungus) protein is Non-reducing polyketide synthase PKS8-1 (PKS8-1).